Here is a 298-residue protein sequence, read N- to C-terminus: Interferon-inducible double-stranded RNA-dependent protein kinase activator A homolog B (298 aa).

3 consecutive DRBM domains span residues 20–87 (TPIQ…ILRG), 112–180 (NPVG…KFKT), and 225–293 (DYVK…YLKI).

This sequence belongs to the PRKRA family. In terms of assembly, homodimer. Interacts with dicer1 and eif2ak2/pkr. Also able to interact with dsRNA. Associates with ribosomes. Expressed in brain, heart, kidney, liver, nerve and spleen.

Its subcellular location is the cytoplasm. The protein localises to the perinuclear region. It localises to the nucleus. It is found in the nucleolus. Its function is as follows. Activates eif2ak2/pkr in the absence of double-stranded RNA (dsRNA), leading to phosphorylation of eif2s1/efi2-alpha and inhibition of translation and induction of apoptosis. Required for siRNA production by dicer1 and for subsequent siRNA-mediated post-transcriptional gene silencing. Does not seem to be required for processing of pre-miRNA to miRNA by dicer1. The chain is Interferon-inducible double-stranded RNA-dependent protein kinase activator A homolog B (prkra-b) from Xenopus laevis (African clawed frog).